Consider the following 456-residue polypeptide: Bifunctional protein GlmU (456 aa).

The segment at 1–229 (MSSHAMSVVI…LSEVEGVNNR (229 aa)) is pyrophosphorylase. UDP-N-acetyl-alpha-D-glucosamine is bound by residues 11–14 (LAAG), K25, Q76, 81–82 (GT), 103–105 (YGD), G140, E154, N169, and N227. D105 lines the Mg(2+) pocket. N227 is a binding site for Mg(2+). The segment at 230 to 250 (LQLARLEHVYQAEQAEKLLLA) is linker. Positions 251–456 (GVMLRDPARF…QGWRRPVKKK (206 aa)) are N-acetyltransferase. Residues R333 and K351 each coordinate UDP-N-acetyl-alpha-D-glucosamine. H363 (proton acceptor) is an active-site residue. Y366 and N377 together coordinate UDP-N-acetyl-alpha-D-glucosamine. Residues A380, 386–387 (NY), S405, A423, and R440 contribute to the acetyl-CoA site.

This sequence in the N-terminal section; belongs to the N-acetylglucosamine-1-phosphate uridyltransferase family. In the C-terminal section; belongs to the transferase hexapeptide repeat family. In terms of assembly, homotrimer. The cofactor is Mg(2+).

It is found in the cytoplasm. The enzyme catalyses alpha-D-glucosamine 1-phosphate + acetyl-CoA = N-acetyl-alpha-D-glucosamine 1-phosphate + CoA + H(+). It catalyses the reaction N-acetyl-alpha-D-glucosamine 1-phosphate + UTP + H(+) = UDP-N-acetyl-alpha-D-glucosamine + diphosphate. It functions in the pathway nucleotide-sugar biosynthesis; UDP-N-acetyl-alpha-D-glucosamine biosynthesis; N-acetyl-alpha-D-glucosamine 1-phosphate from alpha-D-glucosamine 6-phosphate (route II): step 2/2. The protein operates within nucleotide-sugar biosynthesis; UDP-N-acetyl-alpha-D-glucosamine biosynthesis; UDP-N-acetyl-alpha-D-glucosamine from N-acetyl-alpha-D-glucosamine 1-phosphate: step 1/1. It participates in bacterial outer membrane biogenesis; LPS lipid A biosynthesis. In terms of biological role, catalyzes the last two sequential reactions in the de novo biosynthetic pathway for UDP-N-acetylglucosamine (UDP-GlcNAc). The C-terminal domain catalyzes the transfer of acetyl group from acetyl coenzyme A to glucosamine-1-phosphate (GlcN-1-P) to produce N-acetylglucosamine-1-phosphate (GlcNAc-1-P), which is converted into UDP-GlcNAc by the transfer of uridine 5-monophosphate (from uridine 5-triphosphate), a reaction catalyzed by the N-terminal domain. This chain is Bifunctional protein GlmU, found in Cronobacter sakazakii (strain ATCC BAA-894) (Enterobacter sakazakii).